The primary structure comprises 84 residues: Large ribosomal subunit protein uL29 (84 aa).

It belongs to the universal ribosomal protein uL29 family.

This is Large ribosomal subunit protein uL29 from Mycoplasma mobile (strain ATCC 43663 / 163K / NCTC 11711) (Mesomycoplasma mobile).